Consider the following 189-residue polypeptide: 2-oxoglutarate synthase subunit KorC (189 aa).

Heterotetramer of the KorA, KorB, KorC and KorD subunits.

The catalysed reaction is 2 oxidized [2Fe-2S]-[ferredoxin] + 2-oxoglutarate + CoA = succinyl-CoA + 2 reduced [2Fe-2S]-[ferredoxin] + CO2 + H(+). The sequence is that of 2-oxoglutarate synthase subunit KorC (korC) from Methanothermobacter thermautotrophicus (strain ATCC 29096 / DSM 1053 / JCM 10044 / NBRC 100330 / Delta H) (Methanobacterium thermoautotrophicum).